A 428-amino-acid chain; its full sequence is MAKEKPILNVAFIGHVDAGKSTTVGRLLLDGGAIDPQLIVRLRKEAEEKGKAGFEFAYVMDGLKEERERGVTIDVAHKKFPTAKYEVTIVDCPGHRDFIKNMITGASQADAAILVVNVDDAKSGIQPQTREHVFLSRTLGISQLAVAINKMDTVNFSEADYNEMKKMLGDQLLKMVGFNPANITFVPVASLHGDNVFKKSDRTPWYNGPTLAEVIDAFQPPEKPTTLPLRLPIQDVYSITGVGTVPVGRVETGIIKPGDKVIFEPAGAVGEIKTVEMHHEQLPSAEPGDNIGFNVRGVGKKDIKRGDVLGHTTNPPTVAADFTAQIVVLQHPSVMTVGYTPVFHAHTAQIACTFMELQKKLNPATGEVLEENPDFLKAGDAAIVKLMPTKPLVMESVKEIPQLGRFAIRDMGMTVAAGMAIQVTAKNK.

Positions 5 to 225 (KPILNVAFIG…DAFQPPEKPT (221 aa)) constitute a tr-type G domain. Residues 14-21 (GHVDAGKS) form a G1 region. Position 14–21 (14–21 (GHVDAGKS)) interacts with GTP. Residue S21 participates in Mg(2+) binding. Residues 70-74 (GVTID) are G2. The G3 stretch occupies residues 91–94 (DCPG). GTP-binding positions include 91 to 95 (DCPGH) and 149 to 152 (NKMD). The segment at 149–152 (NKMD) is G4. Residues 189–191 (ASL) form a G5 region.

This sequence belongs to the TRAFAC class translation factor GTPase superfamily. Classic translation factor GTPase family. EF-Tu/EF-1A subfamily.

The protein localises to the cytoplasm. It catalyses the reaction GTP + H2O = GDP + phosphate + H(+). Its function is as follows. GTP hydrolase that promotes the GTP-dependent binding of aminoacyl-tRNA to the A-site of ribosomes during protein biosynthesis. The polypeptide is Elongation factor 1-alpha (Methanococcus maripaludis (strain C6 / ATCC BAA-1332)).